The primary structure comprises 161 residues: Ferredoxin/F(420)H(2)-dependent CoB-CoM heterodisulfide reductase subunit C (161 aa).

4Fe-4S ferredoxin-type domains follow at residues Lys10–Arg40 and Ala51–Ile82. Residues Cys19, Cys22, Cys25, Cys29, Cys62, Cys65, Cys68, and Cys72 each coordinate [4Fe-4S] cluster.

It belongs to the HdrC family. As to quaternary structure, the ferredoxin/F(420)H(2)-dependent CoB-CoM heterodisulfide reductase is composed of three subunits; HdrA2, HdrB2 and HdrC2. It depends on [4Fe-4S] cluster as a cofactor.

The protein localises to the cytoplasm. It catalyses the reaction coenzyme B + coenzyme M + 2 oxidized [2Fe-2S]-[ferredoxin] = coenzyme M-coenzyme B heterodisulfide + 2 reduced [2Fe-2S]-[ferredoxin] + 2 H(+). The catalysed reaction is coenzyme B + 2 oxidized coenzyme F420-(gamma-L-Glu)(n) + coenzyme M + 2 reduced [2Fe-2S]-[ferredoxin] + 4 H(+) = coenzyme M-coenzyme B heterodisulfide + 2 reduced coenzyme F420-(gamma-L-Glu)(n) + 2 oxidized [2Fe-2S]-[ferredoxin]. It participates in cofactor metabolism; coenzyme M-coenzyme B heterodisulfide reduction; coenzyme B and coenzyme M from coenzyme M-coenzyme B heterodisulfide: step 1/1. Functionally, part of a complex that catalyzes the reversible reduction of CoM-S-S-CoB to the thiol-coenzymes H-S-CoM (coenzyme M) and H-S-CoB (coenzyme B). Catalyzes the transfer of electrons from ferredoxin to CoM-S-S-CoB during methanogenesis from acetate. Electrons transfer from ferredoxin to CoM-S-S-CoB via HdrA2, HdrC2 and HdrB2. In addition, the complex can use electron bifurcation to direct electron pairs from reduced coenzyme F420 towards the reduction of both ferredoxin and CoB-CoM heterodisulfide. This activity may take place during Fe(III)-dependent anaerobic methane oxidation. This is Ferredoxin/F(420)H(2)-dependent CoB-CoM heterodisulfide reductase subunit C from Methanosarcina acetivorans (strain ATCC 35395 / DSM 2834 / JCM 12185 / C2A).